A 335-amino-acid polypeptide reads, in one-letter code: Succinylglutamate desuccinylase (335 aa).

Zn(2+)-binding residues include H59, E62, and H151. E215 is a catalytic residue.

This sequence belongs to the AspA/AstE family. Succinylglutamate desuccinylase subfamily. It depends on Zn(2+) as a cofactor.

The catalysed reaction is N-succinyl-L-glutamate + H2O = L-glutamate + succinate. It functions in the pathway amino-acid degradation; L-arginine degradation via AST pathway; L-glutamate and succinate from L-arginine: step 5/5. Its function is as follows. Transforms N(2)-succinylglutamate into succinate and glutamate. This chain is Succinylglutamate desuccinylase, found in Pseudomonas putida (strain ATCC 47054 / DSM 6125 / CFBP 8728 / NCIMB 11950 / KT2440).